We begin with the raw amino-acid sequence, 139 residues long: Arsenate reductase (139 aa).

Active-site nucleophile residues include cysteine 10, cysteine 82, and cysteine 89. Disulfide bonds link cysteine 10/cysteine 82 and cysteine 82/cysteine 89.

This sequence belongs to the low molecular weight phosphotyrosine protein phosphatase family. Thioredoxin-coupled ArsC subfamily.

The protein localises to the cytoplasm. It carries out the reaction arsenate + [thioredoxin]-dithiol + H(+) = arsenite + [thioredoxin]-disulfide + H2O. Functionally, catalyzes the reduction of arsenate [As(V)] to arsenite [As(III)]. The protein is Arsenate reductase of Bacillus licheniformis (strain ATCC 14580 / DSM 13 / JCM 2505 / CCUG 7422 / NBRC 12200 / NCIMB 9375 / NCTC 10341 / NRRL NRS-1264 / Gibson 46).